Here is a 169-residue protein sequence, read N- to C-terminus: Shikimate kinase (169 aa).

12–17 (GAGKST) contributes to the ATP binding site. S16 is a Mg(2+) binding site. Substrate-binding residues include D34, R58, and G80. R117 contributes to the ATP binding site. R136 serves as a coordination point for substrate.

This sequence belongs to the shikimate kinase family. In terms of assembly, monomer. It depends on Mg(2+) as a cofactor.

It is found in the cytoplasm. It catalyses the reaction shikimate + ATP = 3-phosphoshikimate + ADP + H(+). Its pathway is metabolic intermediate biosynthesis; chorismate biosynthesis; chorismate from D-erythrose 4-phosphate and phosphoenolpyruvate: step 5/7. Functionally, catalyzes the specific phosphorylation of the 3-hydroxyl group of shikimic acid using ATP as a cosubstrate. This is Shikimate kinase from Rhodococcus erythropolis (strain PR4 / NBRC 100887).